Consider the following 354-residue polypeptide: Alkanal monooxygenase alpha chain (354 aa).

This sequence belongs to the bacterial luciferase oxidoreductase family. In terms of assembly, heterodimer of an alpha and a beta chain.

It carries out the reaction a long-chain fatty aldehyde + FMNH2 + O2 = a long-chain fatty acid + hnu + FMN + H2O + 2 H(+). Light-emitting reaction in luminous bacteria. The polypeptide is Alkanal monooxygenase alpha chain (luxA) (Aliivibrio fischeri (Vibrio fischeri)).